A 364-amino-acid polypeptide reads, in one-letter code: Transcription factor TGA4 (364 aa).

Residues 39-79 are disordered; that stretch reads PGSIIIPTNEKPDSLSEDTSHGTEGTPHKFDQEASTSRHPD. Basic and acidic residues predominate over residues 48-79; that stretch reads EKPDSLSEDTSHGTEGTPHKFDQEASTSRHPD. Residues 78–141 enclose the bZIP domain; sequence PDKIQRRLAQ…NGVDTNALSF (64 aa). Coiled-coil stretches lie at residues 79-127 and 257-277; these read DKIQ…RQQG and NLRQ…EKLQ. Residues 80 to 100 form a basic motif region; sequence KIQRRLAQNREAARKSRLRKK. Residues 106–120 are leucine-zipper; it reads LETSRLKLIHLEQEL. Positions 149–359 constitute a DOG1 domain; the sequence is IVAFEMEYGH…RALSSSWAAR (211 aa). The cysteines at positions 256 and 262 are disulfide-linked.

It belongs to the bZIP family. Binds DNA as a dimer. Interaction with the Dof domain proteins OBP1, OBP2 or OBP3 enhances the binding to the ocs element. Interacts with RAP2-3/EPB, an ethylene-responsive element binding protein. The reduced form interacts with NPR1. In terms of tissue distribution, predominantly expressed in roots.

The protein localises to the nucleus. Its function is as follows. Transcriptional activator that binds specifically to the DNA sequence 5'-TGACG-3'. Recognizes ocs elements like the as-1 motif of the cauliflower mosaic virus 35S promoter. Binding to the as-1-like cis elements mediate auxin- and salicylic acid-inducible transcription. May be involved in the induction of the systemic acquired resistance (SAR) via its interaction with NPR1. Could also bind to the Hex-motif (5'-TGACGTGG-3') another cis-acting element found in plant histone promoters. The polypeptide is Transcription factor TGA4 (TGA4) (Arabidopsis thaliana (Mouse-ear cress)).